Reading from the N-terminus, the 213-residue chain is Chloramphenicol acetyltransferase 3 (213 aa).

The Proton acceptor role is filled by H189.

This sequence belongs to the chloramphenicol acetyltransferase family. Homotrimer.

The catalysed reaction is chloramphenicol + acetyl-CoA = chloramphenicol 3-acetate + CoA. Its function is as follows. This enzyme is an effector of chloramphenicol resistance in bacteria. This is Chloramphenicol acetyltransferase 3 (cat3) from Escherichia coli.